Consider the following 287-residue polypeptide: ATP synthase gamma chain (287 aa).

Belongs to the ATPase gamma chain family. In terms of assembly, F-type ATPases have 2 components, CF(1) - the catalytic core - and CF(0) - the membrane proton channel. CF(1) has five subunits: alpha(3), beta(3), gamma(1), delta(1), epsilon(1). CF(0) has three main subunits: a, b and c.

It is found in the cell inner membrane. Functionally, produces ATP from ADP in the presence of a proton gradient across the membrane. The gamma chain is believed to be important in regulating ATPase activity and the flow of protons through the CF(0) complex. In Hahella chejuensis (strain KCTC 2396), this protein is ATP synthase gamma chain.